Reading from the N-terminus, the 85-residue chain is MKRGALEPSDFQNCLKLFSQPFPQILDQCASNLQTLRHTQGPMQHLELLTLLFDLAGAECLKEVTKVQCTKKDADPVLTNVILPK.

This sequence belongs to the herpesviridae UL91 family.

This is an uncharacterized protein from Alcelaphine herpesvirus 1 (strain C500) (AlHV-1).